We begin with the raw amino-acid sequence, 211 residues long: SAGA-associated factor 11 homolog 2 (211 aa).

The segment at Cys-115 to Cys-136 adopts an SGF11-type zinc-finger fold. Residues Arg-149–Phe-211 form a disordered region. The segment covering Ser-157–Thr-166 has biased composition (low complexity). Ser-187 carries the phosphoserine modification. Low complexity predominate over residues Ser-197–Phe-211.

This sequence belongs to the SGF11 family. As to quaternary structure, component of some SAGA transcription coactivator-HAT complexes, at least composed of Ada2b, not/nonstop, Pcaf/Gcn5, Sgf11 and Spt3. Within the SAGA complex, Sgf11, e(y)2, and not/nonstop form an additional subcomplex of SAGA called the DUB module (deubiquitination module). Interacts directly with not/nonstop. Interacts with the AMEX complex component xmas-2. Interacts with Cbp80; important for promoter recruitment of Sgf11 that is not associated with the DUB module.

The protein resides in the nucleus. The protein localises to the nucleoplasm. Its subcellular location is the cytoplasm. Functionally, component of the transcription regulatory histone acetylation (HAT) complex SAGA, a multiprotein complex that activates transcription by remodeling chromatin and mediating histone acetylation and deubiquitination. Within the SAGA complex, participates in a subcomplex that specifically deubiquitinates histone H2B. The SAGA complex is recruited to specific gene promoters by activators, where it is required for transcription. Required for nuclear receptor-mediated transactivation. Binds independently on SAGA to promoters in an RNA-dependent manner. Binds to mRNA and is essential for total mRNA export from the nucleus. Required to counteract heterochromatin silencing. Controls the development of neuronal connectivity in visual system by being required for accurate axon targeting in the optic lobe. Required for expression of ecdysone-induced genes such as br/broad. This is SAGA-associated factor 11 homolog 2 from Drosophila grimshawi (Hawaiian fruit fly).